The sequence spans 83 residues: Hainantoxin-III 4 (83 aa).

The first 21 residues, 1–21, serve as a signal peptide directing secretion; that stretch reads MKASMYLALAGLVLLFVVGYA. The propeptide occupies 22–48; the sequence is SESEEKEFPRELLSKIFAVDDFKGKER. Intrachain disulfides connect C50–C65, C57–C70, and C64–C77. The residue at position 81 (L81) is a Leucine amide.

It belongs to the neurotoxin 10 (Hwtx-1) family. 15 (Hntx-3) subfamily. In terms of assembly, monomer. Expressed by the venom gland.

Its subcellular location is the secreted. In terms of biological role, selective antagonist of neuronal tetrodotoxin (TTX)-sensitive voltage-gated sodium channels (IC(50)=1270 nM on Nav1.1/SCN1A, 270 nM on Nav1.2/SCN2A, 491 nM on Nav1.3/SCN3A and 232 nM on Nav1.7/SCN9A). This toxin suppress Nav1.7 current amplitude without significantly altering the activation, inactivation, and repriming kinetics. Short extreme depolarizations partially activate the toxin-bound channel, indicating voltage-dependent inhibition of this toxin. This toxin increases the deactivation of the Nav1.7 current after extreme depolarizations. The toxin-Nav1.7 complex is gradually dissociated upon prolonged strong depolarizations in a voltage-dependent manner, and the unbound toxin rebinds to Nav1.7 after a long repolarization. Moreover, analysis of chimeric channels showed that the DIIS3-S4 linker is critical for toxin binding to Nav1.7. These data are consistent with this toxin interacting with Nav1.7 site 4 and trapping the domain II voltage sensor in the closed state. The sequence is that of Hainantoxin-III 4 from Cyriopagopus hainanus (Chinese bird spider).